Reading from the N-terminus, the 247-residue chain is ATP synthase subunit a, chloroplastic (247 aa).

The next 5 membrane-spanning stretches (helical) occupy residues 38-58, 95-115, 134-154, 199-219, and 220-240; these read QVLITSWVVITILLGSVVIAV, VPFIGTMFLFIFVSNWSGALL, INTTVALALLTSAAYFYAGLS, LVVVVLVSLVPLVIPIPVMFL, and GLFTSGIQALIFATLAAAYIG.

This sequence belongs to the ATPase A chain family. F-type ATPases have 2 components, CF(1) - the catalytic core - and CF(0) - the membrane proton channel. CF(1) has five subunits: alpha(3), beta(3), gamma(1), delta(1), epsilon(1). CF(0) has four main subunits: a, b, b' and c.

It localises to the plastid. The protein localises to the chloroplast thylakoid membrane. Its function is as follows. Key component of the proton channel; it plays a direct role in the translocation of protons across the membrane. In Hordeum vulgare (Barley), this protein is ATP synthase subunit a, chloroplastic.